The following is a 454-amino-acid chain: Bifunctional protein GlmU (454 aa).

The tract at residues 1–227 (MSKLSVVILA…MMEVEGANNR (227 aa)) is pyrophosphorylase. UDP-N-acetyl-alpha-D-glucosamine is bound by residues 9–12 (LAAG), Lys-23, Gln-74, 79–80 (GT), 101–103 (YGD), Gly-138, Glu-152, Asn-167, and Asn-225. Asp-103 provides a ligand contact to Mg(2+). Mg(2+) is bound at residue Asn-225. Residues 228-248 (LQLAALERYFQRKQATALLLA) are linker. Residues 249–454 (GVSLADPERF…ADWERPSKKK (206 aa)) form an N-acetyltransferase region. Arg-331 and Lys-349 together coordinate UDP-N-acetyl-alpha-D-glucosamine. Residue His-361 is the Proton acceptor of the active site. UDP-N-acetyl-alpha-D-glucosamine-binding residues include Tyr-364 and Asn-375. Acetyl-CoA is bound by residues Ala-378, 384-385 (NY), Ser-403, Ala-421, and Arg-438.

In the N-terminal section; belongs to the N-acetylglucosamine-1-phosphate uridyltransferase family. This sequence in the C-terminal section; belongs to the transferase hexapeptide repeat family. As to quaternary structure, homotrimer. Mg(2+) serves as cofactor.

It localises to the cytoplasm. The enzyme catalyses alpha-D-glucosamine 1-phosphate + acetyl-CoA = N-acetyl-alpha-D-glucosamine 1-phosphate + CoA + H(+). The catalysed reaction is N-acetyl-alpha-D-glucosamine 1-phosphate + UTP + H(+) = UDP-N-acetyl-alpha-D-glucosamine + diphosphate. The protein operates within nucleotide-sugar biosynthesis; UDP-N-acetyl-alpha-D-glucosamine biosynthesis; N-acetyl-alpha-D-glucosamine 1-phosphate from alpha-D-glucosamine 6-phosphate (route II): step 2/2. Its pathway is nucleotide-sugar biosynthesis; UDP-N-acetyl-alpha-D-glucosamine biosynthesis; UDP-N-acetyl-alpha-D-glucosamine from N-acetyl-alpha-D-glucosamine 1-phosphate: step 1/1. It functions in the pathway bacterial outer membrane biogenesis; LPS lipid A biosynthesis. In terms of biological role, catalyzes the last two sequential reactions in the de novo biosynthetic pathway for UDP-N-acetylglucosamine (UDP-GlcNAc). The C-terminal domain catalyzes the transfer of acetyl group from acetyl coenzyme A to glucosamine-1-phosphate (GlcN-1-P) to produce N-acetylglucosamine-1-phosphate (GlcNAc-1-P), which is converted into UDP-GlcNAc by the transfer of uridine 5-monophosphate (from uridine 5-triphosphate), a reaction catalyzed by the N-terminal domain. The sequence is that of Bifunctional protein GlmU from Actinobacillus succinogenes (strain ATCC 55618 / DSM 22257 / CCUG 43843 / 130Z).